Consider the following 122-residue polypeptide: Large ribosomal subunit protein uL14 (122 aa).

The protein belongs to the universal ribosomal protein uL14 family. As to quaternary structure, part of the 50S ribosomal subunit. Forms a cluster with proteins L3 and L19. In the 70S ribosome, L14 and L19 interact and together make contacts with the 16S rRNA in bridges B5 and B8.

In terms of biological role, binds to 23S rRNA. Forms part of two intersubunit bridges in the 70S ribosome. The polypeptide is Large ribosomal subunit protein uL14 (Herminiimonas arsenicoxydans).